A 157-amino-acid polypeptide reads, in one-letter code: UPF0225 protein PA1039 (157 aa).

This sequence belongs to the UPF0225 family.

This Pseudomonas aeruginosa (strain ATCC 15692 / DSM 22644 / CIP 104116 / JCM 14847 / LMG 12228 / 1C / PRS 101 / PAO1) protein is UPF0225 protein PA1039.